Reading from the N-terminus, the 128-residue chain is Fluoride-specific ion channel FluC (128 aa).

4 helical membrane passes run 5–25 (LFIS…GLLF), 34–54 (FGAL…LGLF), 67–87 (FLIT…SEVV), and 99–119 (FCVL…GIWI). Residues Gly74 and Thr77 each contribute to the Na(+) site.

It belongs to the fluoride channel Fluc/FEX (TC 1.A.43) family.

The protein localises to the cell inner membrane. It catalyses the reaction fluoride(in) = fluoride(out). With respect to regulation, na(+) is not transported, but it plays an essential structural role and its presence is essential for fluoride channel function. Fluoride-specific ion channel. Important for reducing fluoride concentration in the cell, thus reducing its toxicity. The protein is Fluoride-specific ion channel FluC of Haemophilus influenzae (strain PittEE).